We begin with the raw amino-acid sequence, 359 residues long: Insulin gene enhancer protein ISL-2 (359 aa).

2 LIM zinc-binding domains span residues 25-86 (AMCV…RLFG) and 87-149 (IKCA…LLER). Residues 151 to 191 (AAGSPRSPGPLPGARGLHLPDAGSGRQPALRPHVHKQTEKT) form a disordered region. A phosphoserine mark is found at S154 and S157. The homeobox DNA-binding region spans 191-250 (TTRVRTVLNEKQLHTLRTCYAANPRPDALMKEQLVEMTGLSPRVIRVWFQNKRCKDKKKS). Residues 272 to 301 (GTPLVAGSPIRHENAVQGSAVEVQTYQPPW) are LIM-binding domain (LID). A Phosphoserine modification is found at S279. The segment covering 326-336 (ESGSLGNSSGS) has biased composition (low complexity). Residues 326 to 359 (ESGSLGNSSGSDVTSLSSQLPDTPNSMVPSPVET) form a disordered region. The span at 337-359 (DVTSLSSQLPDTPNSMVPSPVET) shows a compositional bias: polar residues.

In terms of assembly, interacts with LHX4.

The protein localises to the nucleus. Transcriptional factor that defines subclasses of motoneurons that segregate into columns in the spinal cord and select distinct axon pathways. The polypeptide is Insulin gene enhancer protein ISL-2 (ISL2) (Homo sapiens (Human)).